The sequence spans 379 residues: Chaperone protein DnaJ (379 aa).

The J domain maps to 7–72 (DYYEVLGVDK…KKRSMYDQFG (66 aa)). The CR-type zinc finger occupies 147-225 (GKKAELSYTR…CGGNGLERKK (79 aa)). Residues cysteine 160, cysteine 163, cysteine 177, cysteine 180, cysteine 199, cysteine 202, cysteine 213, and cysteine 216 each contribute to the Zn(2+) site. CXXCXGXG motif repeat units follow at residues 160–167 (CSECHGTG), 177–184 (CPDCKGTG), 199–206 (CPTCGGEG), and 213–220 (CKKCGGNG).

Belongs to the DnaJ family. Homodimer. It depends on Zn(2+) as a cofactor.

The protein resides in the cytoplasm. Functionally, participates actively in the response to hyperosmotic and heat shock by preventing the aggregation of stress-denatured proteins and by disaggregating proteins, also in an autonomous, DnaK-independent fashion. Unfolded proteins bind initially to DnaJ; upon interaction with the DnaJ-bound protein, DnaK hydrolyzes its bound ATP, resulting in the formation of a stable complex. GrpE releases ADP from DnaK; ATP binding to DnaK triggers the release of the substrate protein, thus completing the reaction cycle. Several rounds of ATP-dependent interactions between DnaJ, DnaK and GrpE are required for fully efficient folding. Also involved, together with DnaK and GrpE, in the DNA replication of plasmids through activation of initiation proteins. This is Chaperone protein DnaJ from Treponema denticola (strain ATCC 35405 / DSM 14222 / CIP 103919 / JCM 8153 / KCTC 15104).